The following is a 417-amino-acid chain: Serine--tRNA ligase (417 aa).

226–228 provides a ligand contact to L-serine; it reads TSE. ATP contacts are provided by residues 257–259 and valine 273; that span reads RRE. Glutamate 280 provides a ligand contact to L-serine. Residue 344–347 coordinates ATP; sequence ELTS. Threonine 379 serves as a coordination point for L-serine.

This sequence belongs to the class-II aminoacyl-tRNA synthetase family. Type-1 seryl-tRNA synthetase subfamily. In terms of assembly, homodimer. The tRNA molecule binds across the dimer.

The protein localises to the cytoplasm. It carries out the reaction tRNA(Ser) + L-serine + ATP = L-seryl-tRNA(Ser) + AMP + diphosphate + H(+). The enzyme catalyses tRNA(Sec) + L-serine + ATP = L-seryl-tRNA(Sec) + AMP + diphosphate + H(+). It participates in aminoacyl-tRNA biosynthesis; selenocysteinyl-tRNA(Sec) biosynthesis; L-seryl-tRNA(Sec) from L-serine and tRNA(Sec): step 1/1. Catalyzes the attachment of serine to tRNA(Ser). Is also able to aminoacylate tRNA(Sec) with serine, to form the misacylated tRNA L-seryl-tRNA(Sec), which will be further converted into selenocysteinyl-tRNA(Sec). In Mycobacterium sp. (strain KMS), this protein is Serine--tRNA ligase.